The chain runs to 1436 residues: Probable ATP-dependent RNA helicase spindle-E (1436 aa).

In terms of domain architecture, Helicase ATP-binding spans 124-291 (LAAINANPVV…FTTTNSIPPV (168 aa)). Residue 137–144 (GETGCGKT) participates in ATP binding. Residues 237–240 (DEVH) carry the DEAH box motif. The 188-residue stretch at 337–524 (KIIMVIDNME…NSVLRAKELE (188 aa)) folds into the Helicase C-terminal domain. Residues 940 to 1003 (ACDISKGMMV…RFMSEELIQQ (64 aa)) enclose the Tudor domain.

It belongs to the DEAD box helicase family. DEAH subfamily.

It is found in the cytoplasm. It catalyses the reaction ATP + H2O = ADP + phosphate + H(+). Its function is as follows. Probable ATP-binding RNA helicase which plays a central role during spermatogenesis and oogenesis by repressing transposable elements and preventing their mobilization, which is essential for the germline integrity. Acts via the piRNA metabolic process, which mediates the repression of transposable elements during meiosis by forming complexes composed of piRNAs and Piwi and govern the methylation and subsequent repression of transposons. Involved in the repression of LTR retrotransposon copia. Also involved in telomere regulation by repressing specialized telomeric retroelements HeT-A, TAHRE, and TART; Drosophila telomeres being maintained by transposition of specialized telomeric retroelements. Involved in telomeric trans-silencing, a repression mechanism by which a transposon or a transgene inserted in subtelomeric heterochromatin has the capacity to repress in trans in the female germline, a homologous transposon, or transgene located in euchromatin. Involved in the repression of testis-expressed Stellate genes by the homologous Su(Ste) repeats. Required for anteroposterior and dorsoventral axis formation during oogenesis. The sequence is that of Probable ATP-dependent RNA helicase spindle-E (spn-E) from Drosophila yakuba (Fruit fly).